A 429-amino-acid polypeptide reads, in one-letter code: TNFAIP3-interacting protein 2 (429 aa).

Position 7 is a phosphoserine (Ser7). Residues 29 to 117 are a coiled coil; sequence QRLRRLQDQL…MQQLLSQPQH (89 aa). The segment covering 177–195 has biased composition (basic and acidic residues); the sequence is HAQRNVGERSPDQSEHTDG. The tract at residues 177-199 is disordered; it reads HAQRNVGERSPDQSEHTDGHTSV. 2 coiled-coil regions span residues 196-226 and 255-340; these read HTSV…LNAK and ELMR…QVSW. A ubiquitin-binding domain (UBD) region spans residues 289-347; the sequence is RDAALERVQMLEQQILAYKDDFMSERADRERAQSRIQELEEKVASLLHQVSWRQDSREP. A disordered region spans residues 372–400; that stretch reads PGGWRPGTGSQQPEPPAEGGHPGAAQRGQ. A compositionally biased stretch (low complexity) spans 388–397; sequence AEGGHPGAAQ. The CCHC NOA-type zinc finger occupies 397–429; sequence QRGQGDLQCPHCLQCFSDEQGEELLRHVAECCQ. Zn(2+) is bound by residues Cys405, Cys408, His423, and Cys427.

In terms of assembly, interacts with STK11/LKB1, TNFAIP3, IKBKG, NFKB1, MAP3K8, TEK, RIPK1, CHUK, IKBKB and SMARCD1. Interacts with polyubiquitin. (Microbial infection) Interacts with severe fever with thrombocytopenia syndrome virus (SFTSV) NSs; this interaction promotes TPL2 complex formation and signaling activity leading to IL-10 production. Post-translationally, in vitro phosphorylated by CHUK. Ubiquitinated; undergoes 'Lys-48'-linked polyubiquitination probably leading to constitutive proteasomal degradation which can be impaired by IKK-A/CHUK or IKBKB probably involving deubiquitination. Deubiquitinated by USP35; leading to stabilization and inhibition of TNFalpha-induced NF-kappa-B activation. In terms of tissue distribution, ubiquitously expressed in all tissues examined.

The protein resides in the cytoplasm. It is found in the nucleus. Its function is as follows. Inhibits NF-kappa-B activation by blocking the interaction of RIPK1 with its downstream effector NEMO/IKBKG. Forms a ternary complex with NFKB1 and MAP3K8 but appears to function upstream of MAP3K8 in the TLR4 signaling pathway that regulates MAP3K8 activation. Involved in activation of the MEK/ERK signaling pathway during innate immune response; this function seems to be stimulus- and cell type specific. Required for stability of MAP3K8. Involved in regulation of apoptosis in endothelial cells; promotes TEK agonist-stimulated endothelial survival. May act as transcriptional coactivator when translocated to the nucleus. Enhances CHUK-mediated NF-kappa-B activation involving NF-kappa-B p50-p65 and p50-c-Rel complexes. This Homo sapiens (Human) protein is TNFAIP3-interacting protein 2.